A 719-amino-acid polypeptide reads, in one-letter code: Translation factor guf1, mitochondrial (719 aa).

Residues 1-75 (MRGALCRPDV…TRCFSALRSL (75 aa)) constitute a mitochondrion transit peptide. Residues 119 to 301 (ERYRNFCIVA…AVISNVPAPV (183 aa)) form the tr-type G domain. Residues 128 to 135 (AHIDHGKS), 194 to 198 (DTPGH), and 248 to 251 (NKID) each bind GTP.

This sequence belongs to the TRAFAC class translation factor GTPase superfamily. Classic translation factor GTPase family. LepA subfamily.

The protein localises to the mitochondrion inner membrane. It carries out the reaction GTP + H2O = GDP + phosphate + H(+). In terms of biological role, promotes mitochondrial protein synthesis. May act as a fidelity factor of the translation reaction, by catalyzing a one-codon backward translocation of tRNAs on improperly translocated ribosomes. Binds to mitochondrial ribosomes in a GTP-dependent manner. This chain is Translation factor guf1, mitochondrial (guf1), found in Neurospora crassa (strain ATCC 24698 / 74-OR23-1A / CBS 708.71 / DSM 1257 / FGSC 987).